A 257-amino-acid chain; its full sequence is Imidazole glycerol phosphate synthase subunit HisF (257 aa).

Residues Asp12 and Asp131 contribute to the active site.

It belongs to the HisA/HisF family. In terms of assembly, heterodimer of HisH and HisF.

The protein resides in the cytoplasm. The enzyme catalyses 5-[(5-phospho-1-deoxy-D-ribulos-1-ylimino)methylamino]-1-(5-phospho-beta-D-ribosyl)imidazole-4-carboxamide + L-glutamine = D-erythro-1-(imidazol-4-yl)glycerol 3-phosphate + 5-amino-1-(5-phospho-beta-D-ribosyl)imidazole-4-carboxamide + L-glutamate + H(+). It functions in the pathway amino-acid biosynthesis; L-histidine biosynthesis; L-histidine from 5-phospho-alpha-D-ribose 1-diphosphate: step 5/9. In terms of biological role, IGPS catalyzes the conversion of PRFAR and glutamine to IGP, AICAR and glutamate. The HisF subunit catalyzes the cyclization activity that produces IGP and AICAR from PRFAR using the ammonia provided by the HisH subunit. This chain is Imidazole glycerol phosphate synthase subunit HisF, found in Burkholderia ambifaria (strain MC40-6).